An 809-amino-acid polypeptide reads, in one-letter code: Putative zinc metalloprotease TRE2 (809 aa).

Composition is skewed to polar residues over residues 1–12 (MRSSYQPVSTTN) and 20–30 (PTASSSHNLLM). Positions 1–66 (MRSSYQPVST…PSYEFDIEDP (66 aa)) are disordered. At 1–125 (MRSSYQPVST…KIGNPFILRR (125 aa)) the chain is on the cytoplasmic side. The span at 37–50 (SPPSSNDNSIETNI) shows a compositional bias: low complexity. The helical; Signal-anchor for type II membrane protein transmembrane segment at 126 to 146 (FFYIIFMSFIAYYVLSSGYLF) threads the bilayer. Residues 147–809 (NEKASGSKGM…VEETNDIGYK (663 aa)) are Extracellular-facing. N228 carries an N-linked (GlcNAc...) asparagine glycan. The 95-residue stretch at 255 to 349 (SNGKLSKVSL…STGDASGLNW (95 aa)) folds into the PA domain. N669 and N736 each carry an N-linked (GlcNAc...) asparagine glycan.

Belongs to the peptidase M28 family. M28B subfamily.

It localises to the membrane. In Saccharomyces cerevisiae (strain ATCC 204508 / S288c) (Baker's yeast), this protein is Putative zinc metalloprotease TRE2 (TRE2).